Consider the following 451-residue polypeptide: Spermidine sinapoyl-CoA acyltransferase (451 aa).

Spermidine is bound by residues tyrosine 47, histidine 169, serine 294, aspartate 316, and leucine 378. Residue histidine 169 is the Proton acceptor of the active site. Residue aspartate 391 is the Proton acceptor of the active site.

This sequence belongs to the plant acyltransferase family. Monomer. As to expression, predominantly expressed in siliques, especially in seeds around the embryo, and, at low levels, in flowers. Barely detectable in stems, leaves, and roots.

It carries out the reaction 2 (E)-sinapoyl-CoA + spermidine = N(1),N(8)-bis[(E)-sinapoyl]-spermidine + 2 CoA + 2 H(+). It functions in the pathway amine and polyamine metabolism; spermidine metabolism. Functionally, spermidine sinapoyl-CoA acyltransferase that mediates the accumulation of disinapoyl spermidine conjugates in seeds. Catalyzes the two conjugating steps required for the biosynthesis of N1,N8-disipanoyl-spermidine. Can also use putrescine as an acyl acceptor to convert it into monosinapoyl-putrescine. The protein is Spermidine sinapoyl-CoA acyltransferase of Arabidopsis thaliana (Mouse-ear cress).